A 431-amino-acid polypeptide reads, in one-letter code: MKNLVEELKWRGLFHDMMPGTEEQLTKESTTAYIGFDPTADSLHIGSMVQIILLVHLKNFGHKPIALIGGATGMIGDPSGKSDERNLLDEATLNKNVAGIKAVLSSFLDFNTTNANAPILVNNYDWMKDFSFIDFARDIGKRITVNYMMSKDSVKKRLGAEGEGMSFTEFTYQLIQGYDFQYLYKNHNCLLQMGGSDQWGNITTGTELVRRMGGEGAKAYALTTPLITKADGSKFGKSEGGNVWLTADKTSVYKFYQFWLNTSDDDAEKYIKIFTFLDKNTIDGLIEEHKTAPHLRVLQRKLTEEITILVHGKEELEKAIKASNILFGNSTSNDLKGLDAATFLEIFDGVPQAEISKTDIEAGINIVEVLNEKSGFLKSNGEARRALSANSIAVNKEKVTEEFTLTTKDMINNQFVLLQSGKKNYFVLNVK.

Tyr-33 is an L-tyrosine binding site. The 'HIGH' region signature appears at 38–47; the sequence is PTADSLHIGS. The L-tyrosine site is built by Tyr-172 and Gln-176. Positions 234–238 match the 'KMSKS' region motif; the sequence is KFGKS. Lys-237 is a binding site for ATP. Positions 364-431 constitute an S4 RNA-binding domain; it reads INIVEVLNEK…KKNYFVLNVK (68 aa).

Belongs to the class-I aminoacyl-tRNA synthetase family. TyrS type 1 subfamily. As to quaternary structure, homodimer.

It is found in the cytoplasm. The catalysed reaction is tRNA(Tyr) + L-tyrosine + ATP = L-tyrosyl-tRNA(Tyr) + AMP + diphosphate + H(+). Its function is as follows. Catalyzes the attachment of tyrosine to tRNA(Tyr) in a two-step reaction: tyrosine is first activated by ATP to form Tyr-AMP and then transferred to the acceptor end of tRNA(Tyr). This Flavobacterium psychrophilum (strain ATCC 49511 / DSM 21280 / CIP 103535 / JIP02/86) protein is Tyrosine--tRNA ligase.